A 213-amino-acid chain; its full sequence is MAERSSNGYKEVPVRQSEESTIAEEEKDTLLEARSYSRRDRKRSRSKAVWFLIALLLLSNIGLLGGLIHYFRKTHHKEKDVPWLPPKTVGRGFVNINNDTALPDQPGLDQSLPHQRAMISVFHQLHCIYMTREGYYAAREGNLDQVNAAHLMHCWDYLRQAIMCHADTTLEWIPAPPNDKGSTGWGVEHTCGDFDAIARWAEDNRLKTTYGIH.

The disordered stretch occupies residues 1-26 (MAERSSNGYKEVPVRQSEESTIAEEE). Residues 48–68 (AVWFLIALLLLSNIGLLGGLI) form a helical membrane-spanning segment. Asparagine 98 carries an N-linked (GlcNAc...) asparagine glycan. Short sequence motifs (HXXHC) lie at residues 123-127 (HQLHC) and 150-154 (HLMHC).

The protein belongs to the ustYa family.

It is found in the membrane. Its pathway is mycotoxin biosynthesis. In terms of biological role, oxidase; part of the gene cluster that mediates the biosynthesis of the secondary metabolite ustiloxin B, an antimitotic tetrapeptide. First, ustA is processed by the subtilisin-like endoprotease Kex2 that is outside the ustiloxin B gene cluster, at the C-terminal side of Arg-Lys, after transfer to Golgi apparatus through the endoplasmic reticulum (ER). Cleavage by KEX2 generates 16 peptides YAIG-I to YAIG-XVI. To process the precursor peptide further, at least two peptidases are necessary to cleave the N-terminal and C-terminal sides of the Tyr-Ala-Ile-Gly core peptide which serves as backbone for the synthesis of ustiloxin B, through cyclization and modification of the tyrosine with a non-protein coding amino acid, norvaline. One of the two peptidases must be the serine peptidase ustP; and the other pepdidase is probably ustH. Macrocyclization of the core peptide derived from ustA requires the tyrosinase ustQ, as well as the homologous oxidases ustYa and ustYb, and leads to the production of the first cyclization product N-desmethylustiloxin F. For the formation of N-desmethylustiloxin F, three oxidation steps are required, hydroxylation at the benzylic position, hydroxylation at either the aromatic ring of Tyr or beta-position of Ile, and oxidative cyclization. UstQ may catalyze the oxidation of a phenol moiety, whereas the ustYa and ustYb are most likely responsible for the remaining two-step oxidations. N-desmethylustiloxin F is then methylated by ustM to yield ustiloxin F which in turn substrate of the cytochrome P450 monooxygenase ustC which catalyzes the formation of S-deoxyustiloxin H. The flavoprotein monooxygenases ustF1 and ustF2 then participate in the modification of the side chain of S-deoxyustiloxin H, leading to the synthesis of an oxime intermediate, via ustiloxin H. Finally, carboxylative dehydration performed by the cysteine desulfurase-like protein ustD yields ustiloxin B. This Aspergillus flavus (strain ATCC 200026 / FGSC A1120 / IAM 13836 / NRRL 3357 / JCM 12722 / SRRC 167) protein is Oxidase ustYa.